We begin with the raw amino-acid sequence, 297 residues long: Tyrosine recombinase XerD (297 aa).

The 85-residue stretch at 2-86 (KKLDPIIEQF…CLRKFFRFLC (85 aa)) folds into the Core-binding (CB) domain. The 185-residue stretch at 107 to 291 (QLPKSLSEEQ…AKTRLKSIHK (185 aa)) folds into the Tyr recombinase domain. Residues Arg147, Lys171, His243, Arg246, and His269 contribute to the active site. The active-site O-(3'-phospho-DNA)-tyrosine intermediate is the Tyr278.

It belongs to the 'phage' integrase family. XerD subfamily. As to quaternary structure, forms a cyclic heterotetrameric complex composed of two molecules of XerC and two molecules of XerD.

The protein localises to the cytoplasm. Site-specific tyrosine recombinase, which acts by catalyzing the cutting and rejoining of the recombining DNA molecules. The XerC-XerD complex is essential to convert dimers of the bacterial chromosome into monomers to permit their segregation at cell division. It also contributes to the segregational stability of plasmids. The sequence is that of Tyrosine recombinase XerD from Haemophilus ducreyi (strain 35000HP / ATCC 700724).